Reading from the N-terminus, the 452-residue chain is MKGSASESPSASVAEATTTDVQVTPTALLQLDREQIRKAVEVISNRSKSKKNNNELLLSGSENLFLMVILWKIPEKELRVKVPLPHSILSESSDVCLFTKDEFDSPEQTEGFYKKLLKKHGVNTISQIIPFKTLKTEYKAYEAKLRLLGSFEVFITDARIRRHLPSHIGRHFYQRKKVPVSVNLLAKNLSKEINRCITGTVLNISKRGSCSTIRIGHTGMETEHIVDNILAVSEMLSEKLPEKWQSVKLLFLKTEKSVSLPIFSSFVTSQDENAVSLRSLRKQELKKRKRENAKLKKESKMLRKKSKKATSLLTQSGLASSAPAKSPGAQKKKTNKAHKKQKVTEECEEAIPQLVPIGETPDKENVKMQENITGKTPKSKSDPSTPKGKKRKALLATETPEASAPGTSGKKQKKDVQEFRKPEASSFSTPRKSGKKASNTPRDKKTKAAHSN.

An N-acetylmethionine modification is found at methionine 1. Residues lysine 119 and lysine 253 each participate in a glycyl lysine isopeptide (Lys-Gly) (interchain with G-Cter in SUMO2) cross-link. Positions 277–350 (LRSLRKQELK…QKVTEECEEA (74 aa)) form a coiled coil. Positions 283–452 (QELKKRKREN…DKKTKAAHSN (170 aa)) are disordered. Residues 292–301 (NAKLKKESKM) show a composition bias toward basic and acidic residues. Polar residues predominate over residues 309–319 (ATSLLTQSGLA). A compositionally biased stretch (basic residues) spans 330-341 (QKKKTNKAHKKQ). Threonine 334, threonine 344, threonine 360, threonine 399, and threonine 407 each carry phosphothreonine. Residues 414-423 (KDVQEFRKPE) are compositionally biased toward basic and acidic residues. Residues 425 to 440 (SSFSTPRKSGKKASNT) show a composition bias toward polar residues. Threonine 429 bears the Phosphothreonine mark. Lysine 432 bears the N6-acetyllysine mark. Serine 433 is modified (phosphoserine).

Belongs to the universal ribosomal protein uL1 family. Highly divergent. Interacts with ING1. Interacts with KPNA7 and KPNA2.

The protein resides in the nucleus. It localises to the nucleolus. Its function is as follows. Regulates cellular senescence through inhibition of PTEN translation. Acts as a pro-apoptotic regulator in response to DNA damage. This chain is Ribosomal L1 domain-containing protein 1, found in Mus musculus (Mouse).